The chain runs to 483 residues: Probable cytochrome P450 517A1 (483 aa).

Residues Met1 to Lys21 traverse the membrane as a helical segment. Cys429 contacts heme.

The protein belongs to the cytochrome P450 family. It depends on heme as a cofactor.

It is found in the membrane. The polypeptide is Probable cytochrome P450 517A1 (cyp517A1) (Dictyostelium discoideum (Social amoeba)).